The sequence spans 396 residues: Vitamin K-dependent protein Z (396 aa).

Positions 1-46 constitute a Gla domain; that stretch reads AGSYLLEELFEGHLEKECWEEICVYEEAREVFEDDETTDEFWRTYM. 13 positions are modified to 4-carboxyglutamate: Glu7, Glu8, Glu11, Glu15, Glu17, Glu20, Glu21, Glu26, Glu27, Glu30, Glu33, Glu36, and Glu40. The cysteines at positions 18 and 23 are disulfide-linked. EGF-like domains are found at residues 47 to 83 and 85 to 126; these read GGSP…PNCA and AESE…RSCL. 7 disulfide bridges follow: Cys51–Cys62, Cys56–Cys71, Cys73–Cys82, Cys89–Cys101, Cys97–Cys110, Cys112–Cys125, and Cys169–Cys185. A glycan (O-linked (Glc...) serine) is linked at Ser53. N-linked (GlcNAc...) asparagine glycosylation is present at Asn59. (3R)-3-hydroxyaspartate is present on Asp64. The Peptidase S1 domain occupies 135–357; the sequence is TLGPECCQRP…YALWLRQVTQ (223 aa). Asn191 and Asn289 each carry an N-linked (GlcNAc...) asparagine glycan. Residues Cys284 and Cys298 are joined by a disulfide bond. A disordered region spans residues 356–396; it reads TQQPSRASPRGDRGQGRDGEPVPGDRGGRWAPTALPPGPLV. The segment covering 364 to 375 has biased composition (basic and acidic residues); that stretch reads PRGDRGQGRDGE. O-linked (GalNAc...) threonine glycosylation occurs at Thr388.

The protein belongs to the peptidase S1 family. In terms of processing, the iron and 2-oxoglutarate dependent 3-hydroxylation of aspartate and asparagine is (R) stereospecific within EGF domains. As to expression, plasma.

Its subcellular location is the secreted. Its function is as follows. Inhibits activity of the coagulation protease factor Xa in the presence of SERPINA10, calcium and phospholipids. Appears to assist hemostasis by binding thrombin and promoting its association with phospholipid vesicles. The sequence is that of Vitamin K-dependent protein Z (PROZ) from Bos taurus (Bovine).